Reading from the N-terminus, the 97-residue chain is Secreted Ly-6/uPAR domain-containing protein 2 (97 aa).

An N-terminal signal peptide occupies residues 1–22 (MQLGTGLLLAAVLSLQLAAAEA). Intrachain disulfides connect C25–C47, C28–C34, C40–C68, C72–C88, and C89–C94. The region spanning 25–95 (CHQCTGFGGC…IACCQTSLCN (71 aa)) is the UPAR/Ly6 domain.

In terms of assembly, interacts with CHRNA3, CHRNA4, CHRNA5, CHRNA7, CHRNB2 and CHRNB4. Interacts with CHRM1 and CHRM3 probably in an allosteric manner. Expressed at highest levels in cervix and esophagus, followed by adult and fetal skin. Expressed at lower levels in brain, lung, stomach, small intestine, colon, rectum, uterus, and thymus. Not detected in spleen nor bone marrow. Up-regulated 3-fold in psoriatic lesional skin. In the epidermis, predominantly produced by keratinocytes of the suprabasal epidermal compartment (at protein level). In attached gingiva, produced at highest levels by basal cells located in the lowermost epithelial layers (at protein level). Detected in serum (at protein level).

The protein localises to the secreted. Its function is as follows. Binds and may modulate the functional properties of nicotinic and muscarinic acetylcholine receptors. May regulate keratinocytes proliferation, differentiation and apoptosis. In vitro moderately inhibits ACh-evoked currents of alpha-3:beta-2-containing nAChRs and strongly these of alpha-4:beta-2-containing nAChRs, modulates alpha-7-containing nAChRs, and inhibits nicotine-induced signaling probably implicating alpha-3:beta-4-containing nAChRs. Proposed to act on alpha-3:beta-2 and alpha-7 nAChRs in an orthosteric, and on mAChRs, such as CHRM1 and CHRM3, in an allosteric manner. The chain is Secreted Ly-6/uPAR domain-containing protein 2 from Homo sapiens (Human).